The primary structure comprises 325 residues: Lipoyl synthase (325 aa).

The [4Fe-4S] cluster site is built by Cys72, Cys77, Cys83, Cys98, Cys102, Cys105, and Ser312. The Radical SAM core domain maps to 84-301 (FSSGTATFMI…AEEGMKMGFK (218 aa)).

It belongs to the radical SAM superfamily. Lipoyl synthase family. The cofactor is [4Fe-4S] cluster.

It is found in the cytoplasm. The enzyme catalyses [[Fe-S] cluster scaffold protein carrying a second [4Fe-4S](2+) cluster] + N(6)-octanoyl-L-lysyl-[protein] + 2 oxidized [2Fe-2S]-[ferredoxin] + 2 S-adenosyl-L-methionine + 4 H(+) = [[Fe-S] cluster scaffold protein] + N(6)-[(R)-dihydrolipoyl]-L-lysyl-[protein] + 4 Fe(3+) + 2 hydrogen sulfide + 2 5'-deoxyadenosine + 2 L-methionine + 2 reduced [2Fe-2S]-[ferredoxin]. It functions in the pathway protein modification; protein lipoylation via endogenous pathway; protein N(6)-(lipoyl)lysine from octanoyl-[acyl-carrier-protein]: step 2/2. Its function is as follows. Catalyzes the radical-mediated insertion of two sulfur atoms into the C-6 and C-8 positions of the octanoyl moiety bound to the lipoyl domains of lipoate-dependent enzymes, thereby converting the octanoylated domains into lipoylated derivatives. The sequence is that of Lipoyl synthase from Stutzerimonas stutzeri (strain A1501) (Pseudomonas stutzeri).